A 231-amino-acid chain; its full sequence is Ion-translocating oxidoreductase complex subunit E (231 aa).

6 consecutive transmembrane segments (helical) span residues 18–38 (ALVQ…ATNA), 39–59 (LGLG…ISTL), 63–83 (TPAE…VSAV), 86–106 (LINA…PLIV), 125–145 (ALSA…MFVL), and 182–202 (PFLL…MLAG).

The protein belongs to the NqrDE/RnfAE family. As to quaternary structure, the complex is composed of six subunits: RsxA, RsxB, RsxC, RsxD, RsxE and RsxG.

The protein localises to the cell inner membrane. Functionally, part of a membrane-bound complex that couples electron transfer with translocation of ions across the membrane. Required to maintain the reduced state of SoxR. This is Ion-translocating oxidoreductase complex subunit E from Escherichia coli O127:H6 (strain E2348/69 / EPEC).